A 372-amino-acid chain; its full sequence is Glutamate 5-kinase (372 aa).

Lys-14 contacts ATP. Substrate is bound by residues Ser-54, Asp-141, and Asn-153. Residues 173 to 174 (TD) and 215 to 221 (TGGMATK) each bind ATP. The region spanning 280–358 (RGQVVLDTGA…DNIEEILGYD (79 aa)) is the PUA domain.

The protein belongs to the glutamate 5-kinase family.

Its subcellular location is the cytoplasm. The catalysed reaction is L-glutamate + ATP = L-glutamyl 5-phosphate + ADP. The protein operates within amino-acid biosynthesis; L-proline biosynthesis; L-glutamate 5-semialdehyde from L-glutamate: step 1/2. Catalyzes the transfer of a phosphate group to glutamate to form L-glutamate 5-phosphate. This is Glutamate 5-kinase from Shewanella halifaxensis (strain HAW-EB4).